Reading from the N-terminus, the 210-residue chain is MRLTPDVLMQAYATGIFPMAEHRDDPDIFWVDPLRRGIMPLRGFHMSRSLRRQMLRTAFDIRIDQDFAGVVDGCADRADTWINDEIRRLYNILHAQDRAHSLEVWEGDTLVGGVYGVTLGAAFFGESMFSRRSNASKIALACLVDRLLDGGFALFDTQFLTEHLASLGAIEISRAQYQKRLQEACARPASFLNPPLRSPQEVVQRITQMS.

This sequence belongs to the L/F-transferase family.

The protein localises to the cytoplasm. It catalyses the reaction N-terminal L-lysyl-[protein] + L-leucyl-tRNA(Leu) = N-terminal L-leucyl-L-lysyl-[protein] + tRNA(Leu) + H(+). The enzyme catalyses N-terminal L-arginyl-[protein] + L-leucyl-tRNA(Leu) = N-terminal L-leucyl-L-arginyl-[protein] + tRNA(Leu) + H(+). It carries out the reaction L-phenylalanyl-tRNA(Phe) + an N-terminal L-alpha-aminoacyl-[protein] = an N-terminal L-phenylalanyl-L-alpha-aminoacyl-[protein] + tRNA(Phe). Functionally, functions in the N-end rule pathway of protein degradation where it conjugates Leu, Phe and, less efficiently, Met from aminoacyl-tRNAs to the N-termini of proteins containing an N-terminal arginine or lysine. The polypeptide is Leucyl/phenylalanyl-tRNA--protein transferase (Roseobacter denitrificans (strain ATCC 33942 / OCh 114) (Erythrobacter sp. (strain OCh 114))).